The primary structure comprises 356 residues: UDP-N-acetylglucosamine--N-acetylmuramyl-(pentapeptide) pyrophosphoryl-undecaprenol N-acetylglucosamine transferase (356 aa).

Residues 10 to 12 (TAG), N123, R159, S193, I240, and Q284 each bind UDP-N-acetyl-alpha-D-glucosamine.

Belongs to the glycosyltransferase 28 family. MurG subfamily.

Its subcellular location is the cell membrane. It catalyses the reaction di-trans,octa-cis-undecaprenyl diphospho-N-acetyl-alpha-D-muramoyl-L-alanyl-D-glutamyl-meso-2,6-diaminopimeloyl-D-alanyl-D-alanine + UDP-N-acetyl-alpha-D-glucosamine = di-trans,octa-cis-undecaprenyl diphospho-[N-acetyl-alpha-D-glucosaminyl-(1-&gt;4)]-N-acetyl-alpha-D-muramoyl-L-alanyl-D-glutamyl-meso-2,6-diaminopimeloyl-D-alanyl-D-alanine + UDP + H(+). The protein operates within cell wall biogenesis; peptidoglycan biosynthesis. Functionally, cell wall formation. Catalyzes the transfer of a GlcNAc subunit on undecaprenyl-pyrophosphoryl-MurNAc-pentapeptide (lipid intermediate I) to form undecaprenyl-pyrophosphoryl-MurNAc-(pentapeptide)GlcNAc (lipid intermediate II). This is UDP-N-acetylglucosamine--N-acetylmuramyl-(pentapeptide) pyrophosphoryl-undecaprenol N-acetylglucosamine transferase from Corynebacterium glutamicum (strain R).